A 317-amino-acid chain; its full sequence is MLGEQAYLDLCKQIFKTGEQRGDRTNTGTHSIFGHQIRFDLNKGFPLLTTKRVPFRLVASELLWFIKGDTNIRYLLKHNNNIWNEWAFEKWVNSADYQGPDMANFGLRSQKDENFNKQYQEQMELFKTRILEDDSFADKYGDLGSVYGKQWRNWKTTQNETIDQLKDVIHSIKTNPNSRRHIVSAWNPEDIPTMALPPCHTLFQFYVSNGKLSCQLYQRSADVFLGVPFNIASYALLTHLIAHECGLEVGDFVHTFGDAHIYSNHVEQVETQLEREIRDFPQLIINKDKNSIFEMDLDDLVIENYNPHPSIKAPIAV.

Residues arginine 24 and arginine 179–arginine 180 contribute to the dUMP site. Cysteine 199 functions as the Nucleophile in the catalytic mechanism. DUMP-binding positions include arginine 219–aspartate 222, asparagine 230, and histidine 260–tyrosine 262. Residue aspartate 222 coordinates (6R)-5,10-methylene-5,6,7,8-tetrahydrofolate. Alanine 316 serves as a coordination point for (6R)-5,10-methylene-5,6,7,8-tetrahydrofolate.

Belongs to the thymidylate synthase family. Bacterial-type ThyA subfamily. In terms of assembly, homodimer.

Its subcellular location is the cytoplasm. It catalyses the reaction dUMP + (6R)-5,10-methylene-5,6,7,8-tetrahydrofolate = 7,8-dihydrofolate + dTMP. The protein operates within pyrimidine metabolism; dTTP biosynthesis. Functionally, catalyzes the reductive methylation of 2'-deoxyuridine-5'-monophosphate (dUMP) to 2'-deoxythymidine-5'-monophosphate (dTMP) while utilizing 5,10-methylenetetrahydrofolate (mTHF) as the methyl donor and reductant in the reaction, yielding dihydrofolate (DHF) as a by-product. This enzymatic reaction provides an intracellular de novo source of dTMP, an essential precursor for DNA biosynthesis. The polypeptide is Thymidylate synthase (Oceanobacillus iheyensis (strain DSM 14371 / CIP 107618 / JCM 11309 / KCTC 3954 / HTE831)).